Reading from the N-terminus, the 411-residue chain is MSKPEDTSAAAAAPAGEAGNNLNIADGEIESNWETVIDNFDNMELKEELLRGVYAYGFERPSAIQARAIVPVIKGHDVIAQAQSGTGKTATFSIAILQRIDPSIKAVQALILAPTRELAQQIQKVVIALGDYMKIDCHACIGGTNVREDMAKLNEGAQVVVGTPGRVYDMINRRAFKTDQLKMFCLDEADEMLSRGFKDQMYEVFQLLPQDTQCVLLSATMPQEVLEVTKKFMRDPIRILVKRDELTLEGIKQFYVAVEKEDWKLDTLCDLYETVTITQAVIFCNTRRKVDWLTDKLTSREFTVSAMHGDMEQAQREVIMREFRSGSSRVLITTDLLARGIDVQQVSLVINYDLPSNRENYIHRIGRGGRFGRKGVAINFVTSDDVRMLRDIEQFYSTQIDEMPLNVADLI.

Positions 1–23 (MSKPEDTSAAAAAPAGEAGNNLN) are disordered. A compositionally biased stretch (low complexity) spans 9–19 (AAAAAPAGEAG). The short motif at 38-66 (DNFDNMELKEELLRGVYAYGFERPSAIQA) is the Q motif element. Residues 69 to 239 (IVPVIKGHDV…KKFMRDPIRI (171 aa)) enclose the Helicase ATP-binding domain. 82–89 (AQSGTGKT) contacts ATP. The DEAD box motif lies at 187–190 (DEAD). The Helicase C-terminal domain occupies 250–411 (GIKQFYVAVE…EMPLNVADLI (162 aa)).

This sequence belongs to the DEAD box helicase family. eIF4A subfamily. In terms of assembly, component of the eIF4F complex, which composition varies with external and internal environmental conditions. It is composed of at least eIF4A, eIF4E and eIF4G.

It is found in the cytoplasm. The enzyme catalyses ATP + H2O = ADP + phosphate + H(+). In terms of biological role, ATP-dependent RNA helicase which is a subunit of the eIF4F complex involved in cap recognition and is required for mRNA binding to ribosome. In the current model of translation initiation, eIF4A unwinds RNA secondary structures in the 5'-UTR of mRNAs which is necessary to allow efficient binding of the small ribosomal subunit, and subsequent scanning for the initiator codon. The polypeptide is ATP-dependent RNA helicase eIF4A (TIF1) (Mycosarcoma maydis (Corn smut fungus)).